The primary structure comprises 474 residues: MTRINPIDLSFLLLERANRPNHMAAYTIFEKPKGQKSSFGPRLFDAYRHSQAAKPFNHKLKWLGTDVAAWETVEPDMGYHIRHLALPAPGSMQQFHETVSFLNTGLLDRGHPMWECYIIDGIERGRIAILLKVHHALIDGEGGLRAMRNFLSDSPDDTTLAGPWMSAQGADRPRRTPATVSRRAQLQGQLQGMIKGLTKLPSGLFGVSADAADLGAQALSLKARKASLPFTARRTLFNNTAKSAARAYGNVELPLADVKALAKATGTSVNDVVMTVIDDALHHYLAEHQASTDRPLVAFMPMSLREKSGEGGGNRVSAELVPMGAPKASPVERLKEINAATTRAKDKGRGMQTTSRQAYALLLLGSLTVADALPLLGKLPSANVVISNMKGPTEQLYLAGAPLVAFSGLPIVPPGAGLNVTFASINTALCIAIGAAPEAVHEPSRLAELMQRAFTELQTEAGTTSPTTSKSRTP.

The active-site Proton acceptor is His-135.

This sequence belongs to the long-chain O-acyltransferase family.

It catalyses the reaction an acyl-CoA + a 1,2-diacyl-sn-glycerol = a triacyl-sn-glycerol + CoA. The protein operates within glycerolipid metabolism; triacylglycerol biosynthesis. Required for maintaining the appropriate mycolic acid composition and permeability of the envelope on its exposure to acidic pH. This is Probable diacyglycerol O-acyltransferase Tgs4 (tgs4) from Mycobacterium tuberculosis (strain CDC 1551 / Oshkosh).